The primary structure comprises 130 residues: Fluoride-specific ion channel FluC (130 aa).

The next 4 membrane-spanning stretches (helical) occupy residues 7–27 (VLAI…LGLW), 36–56 (LGTL…VAVF), 69–89 (ALIT…AEVV), and 99–119 (LGFG…LAGI). Na(+) contacts are provided by Gly-76 and Thr-79.

This sequence belongs to the fluoride channel Fluc/FEX (TC 1.A.43) family.

The protein resides in the cell inner membrane. It catalyses the reaction fluoride(in) = fluoride(out). With respect to regulation, na(+) is not transported, but it plays an essential structural role and its presence is essential for fluoride channel function. Its function is as follows. Fluoride-specific ion channel. Important for reducing fluoride concentration in the cell, thus reducing its toxicity. This Albidiferax ferrireducens (strain ATCC BAA-621 / DSM 15236 / T118) (Rhodoferax ferrireducens) protein is Fluoride-specific ion channel FluC.